The following is a 97-amino-acid chain: uncharacterized protein (97 aa).

3 consecutive transmembrane segments (helical) span residues 5-25 (INYL…FVGI), 49-71 (IAGY…SFQG), and 75-92 (LIPP…IYVN).

The protein resides in the cell membrane. This is an uncharacterized protein from Bacillus subtilis (strain 168).